A 1215-amino-acid chain; its full sequence is Reverse gyrase 2 (1215 aa).

An RG N-terminal-type zinc finger spans residues 3–44; sequence GGVNAVYMGLCYNCGGNIDEDRLEKGLPCARCLPSPPRRATP. Positions 13, 16, 31, and 34 each coordinate Zn(2+). ATP-binding positions include glutamine 89 and 106–113; that span reads APTGVGKS. Residues 93-249 enclose the Helicase ATP-binding domain; sequence AKRLVKGDSF…SLVKARLKLY (157 aa). Positions 209 to 212 match the DEAD box motif; that stretch reads DDVD. Residues 614–1215 form a topoisomerase I region; that stretch reads VRVKTTLLVV…TGDVMGQSEA (602 aa). One can recognise a Toprim domain in the interval 618–783; it reads TTLLVVESPT…NVRRGRFHEV (166 aa). Glutamate 624 contacts Mg(2+). An RG C-terminal-type zinc finger spans residues 702–729; that stretch reads IKRCLDCGAQHTSSSPFCPRCGSPRQVD. 4 residues coordinate Zn(2+): cysteine 705, cysteine 708, cysteine 719, and cysteine 722. Aspartate 752 is a Mg(2+) binding site. The Topo IA-type catalytic domain maps to 799-1200; it reads EKSLIEAQKV…SVWRMVDEAV (402 aa). Tyrosine 943 functions as the O-(5'-phospho-DNA)-tyrosine intermediate in the catalytic mechanism.

It in the N-terminal section; belongs to the DEAD box helicase family. DDVD subfamily. This sequence in the C-terminal section; belongs to the type IA topoisomerase family. Monomer. It depends on Zn(2+) as a cofactor. Mg(2+) is required as a cofactor.

The protein localises to the cytoplasm. It carries out the reaction ATP + H2O = ADP + phosphate + H(+). Functionally, modifies the topological state of DNA by introducing positive supercoils in an ATP-dependent process, increasing the linking number in steps of +1. Binds to single-stranded DNA, transiently cleaves and then rejoins the ends, introducing a positive supercoil in the process. The scissile phosphodiester is attacked by the catalytic tyrosine of the enzyme, resulting in the formation of a DNA-(5'-phosphotyrosyl)-enzyme intermediate. Probably involved in rewinding DNA strands in regions of the chromosome that have opened up to allow replication, transcription, DNA repair and/or for DNA protection. In Aeropyrum pernix (strain ATCC 700893 / DSM 11879 / JCM 9820 / NBRC 100138 / K1), this protein is Reverse gyrase 2.